We begin with the raw amino-acid sequence, 430 residues long: RNA polymerase-associated protein LEO1 (430 aa).

Polar residues predominate over residues 1–10; the sequence is MSSSEGNSDA. The tract at residues 1 to 128 is disordered; sequence MSSSEGNSDA…SRGSLNDLQG (128 aa). Residues 18-30 are compositionally biased toward low complexity; that stretch reads KSSTPSSRGSSPD. Over residues 99–119 the composition is skewed to basic and acidic residues; sequence REGKPKESNTRARLSDSDAES. 2 coiled-coil regions span residues 326 to 347 and 409 to 429; these read TRRENARKEEESLRAHIRRTQM and EEYRKRKQQQKKQIVTSDEES. The disordered stretch occupies residues 349 to 430; sequence RNNFKVRGPR…QIVTSDEESD (82 aa).

It belongs to the LEO1 family. In terms of assembly, component of the PAF1 complex which consists of at least cdc-73, ctr-9, leo-1, pafo-1 and rtfo-1.

The protein resides in the nucleus. The protein localises to the cytoplasm. Component of the PAF1 complex which is a multifunctional complex involved in transcription initiation via genetic interactions with TATA-binding proteins, elongation and transcription-coupled histone modification. The polypeptide is RNA polymerase-associated protein LEO1 (Caenorhabditis elegans).